The following is a 901-amino-acid chain: HTH-type transcriptional regulator MalT (901 aa).

Residue 39–46 (SPAGYGKT) coordinates ATP. One can recognise an HTH luxR-type domain in the interval 829-894 (ELIRTSPLTQ…DAVQHAQQLL (66 aa)). Residues 853 to 872 (NEQIAGELEVAATTIKTHIR) constitute a DNA-binding region (H-T-H motif).

It belongs to the MalT family. Monomer in solution. Oligomerizes to an active state in the presence of the positive effectors ATP and maltotriose.

Its activity is regulated as follows. Activated by ATP and maltotriose, which are both required for DNA binding. Positively regulates the transcription of the maltose regulon whose gene products are responsible for uptake and catabolism of malto-oligosaccharides. Specifically binds to the promoter region of its target genes, recognizing a short DNA motif called the MalT box. The protein is HTH-type transcriptional regulator MalT of Escherichia coli (strain ATCC 8739 / DSM 1576 / NBRC 3972 / NCIMB 8545 / WDCM 00012 / Crooks).